Consider the following 349-residue polypeptide: MIEFDNLTYLHGKPQGTGLLKANPEDFVVVEDLGFEPDGEGEHILVRILKNGCNTRFVADALAKFLKIHAREVSFAGQKDKHAVTEQWLCARVPGKEMPDLSAFQLEGCQVLEYARHKRKLRLGALKGNAFTLVLREVSNRDDVEQRLIDICVKGVPNYFGAQRFGIGGSNLQGALRWAQTNTPVRDRNKRSFWLSAARSALFNQIVAERLKKADVNQVVDGDALQLAGRGSWFVATTEELAELQRRVNDKVLMITAVLPGSGEWGTQREALAFEQAAVAEETELQTLLVREKVEAARRAMLLYPQQLSWNWWDDVTVEIRFWLPAGSFATSVVRELINTTGDYAHIAE.

Phe-27 is a binding site for substrate. Asp-80 functions as the Nucleophile in the catalytic mechanism. Position 129 (Asn-129) interacts with substrate. Residues 155 to 303 (GVPNYFGAQR…VEAARRAMLL (149 aa)) enclose the TRUD domain. Phe-329 provides a ligand contact to substrate.

This sequence belongs to the pseudouridine synthase TruD family.

The catalysed reaction is uridine(13) in tRNA = pseudouridine(13) in tRNA. Its function is as follows. Responsible for synthesis of pseudouridine from uracil-13 in transfer RNAs. This chain is tRNA pseudouridine synthase D, found in Escherichia coli O81 (strain ED1a).